The following is a 224-amino-acid chain: Probable molybdenum cofactor guanylyltransferase (224 aa).

Residues 20–22, K33, D88, and D117 each bind GTP; that span reads LAG. Residue D117 participates in Mg(2+) binding.

Belongs to the MobA family. Mg(2+) is required as a cofactor.

It localises to the cytoplasm. It catalyses the reaction Mo-molybdopterin + GTP + H(+) = Mo-molybdopterin guanine dinucleotide + diphosphate. Its function is as follows. Transfers a GMP moiety from GTP to Mo-molybdopterin (Mo-MPT) cofactor (Moco or molybdenum cofactor) to form Mo-molybdopterin guanine dinucleotide (Mo-MGD) cofactor. The protein is Probable molybdenum cofactor guanylyltransferase of Methanosarcina mazei (strain ATCC BAA-159 / DSM 3647 / Goe1 / Go1 / JCM 11833 / OCM 88) (Methanosarcina frisia).